Reading from the N-terminus, the 137-residue chain is CDGSH iron-sulfur domain-containing protein 3, mitochondrial (137 aa).

At lysine 65 the chain carries N6-acetyllysine; alternate. Lysine 65 carries the N6-succinyllysine; alternate modification. Residues cysteine 70, cysteine 72, cysteine 81, and histidine 85 each coordinate [2Fe-2S] cluster. Lysine 96 is subject to N6-acetyllysine. Residues cysteine 108, cysteine 110, cysteine 119, and histidine 123 each contribute to the [2Fe-2S] cluster site. Lysine 124 carries the N6-acetyllysine; alternate modification. At lysine 124 the chain carries N6-succinyllysine; alternate.

It belongs to the CISD protein family. As to quaternary structure, monomer. Requires [2Fe-2S] cluster as cofactor.

It localises to the mitochondrion. Functionally, can transfer its iron-sulfur clusters to the apoferrodoxins FDX1 and FDX2. Contributes to mitochondrial iron homeostasis and in maintaining normal levels of free iron and reactive oxygen species, and thereby contributes to normal mitochondrial function. In Mus musculus (Mouse), this protein is CDGSH iron-sulfur domain-containing protein 3, mitochondrial (Cisd3).